Reading from the N-terminus, the 419-residue chain is Pygopus homolog 1 (419 aa).

Disordered regions lie at residues 1 to 64 (MPAE…PNSD) and 175 to 338 (HFRQ…SSSD). Over residues 18-30 (GDSGLDGLGGPGV) the composition is skewed to gly residues. A Nuclear localization signal motif is present at residues 35 to 41 (PDKKKRK). 2 stretches are compositionally biased toward polar residues: residues 175–221 (HFRQ…SNHS) and 240–255 (DFTQ…NSSA). Over residues 276-286 (VNRNNAVNQEN) the composition is skewed to low complexity. A compositionally biased stretch (polar residues) spans 287–307 (SRSSSTEATNNNPANGTQNKP). The PHD-type zinc finger occupies 340-398 (VYPCGICTNEVNDDQDAILCEASCQKWFHRICTGMTETAYGLLTAEASAVWGCDTCMAD). The tract at residues 341-388 (YPCGICTNEVNDDQDAILCEASCQKWFHRICTGMTETAYGLLTAEASA) is interaction with H3K4me2. The tract at residues 373–391 (GMTETAYGLLTAEASAVWG) is interaction with BCL9.

In terms of assembly, interacts with BCL9 via The PHD-type zinc finger motiv, and thereby becomes part of the nuclear beta-catenin/TCF complex. Identified in a complex with BCL9L, CDC73, CTNNB1 and PYGO1. Interacts with histone H3 mono-, di- or tri-methylated at 'Lys4' (H3K4me1, H3K4me2, H3K4me3); the interaction is enhanced by the interaction with BCL9.

Its subcellular location is the nucleus. In terms of biological role, involved in signal transduction through the Wnt pathway. The sequence is that of Pygopus homolog 1 (PYGO1) from Homo sapiens (Human).